A 501-amino-acid chain; its full sequence is uncharacterized protein (501 aa).

E236 (proton donor) is an active-site residue. E333 serves as the catalytic Nucleophile.

It belongs to the glycosyl hydrolase 5 (cellulase A) family.

It is found in the mitochondrion intermembrane space. This is an uncharacterized protein from Saccharomyces cerevisiae (strain ATCC 204508 / S288c) (Baker's yeast).